The chain runs to 100 residues: NADH-ubiquinone oxidoreductase chain 4L (100 aa).

The next 3 helical transmembrane spans lie at isoleucine 3–leucine 23, isoleucine 28–tyrosine 48, and leucine 64–phenylalanine 84.

The protein belongs to the complex I subunit 4L family.

Its subcellular location is the mitochondrion membrane. The catalysed reaction is a ubiquinone + NADH + 5 H(+)(in) = a ubiquinol + NAD(+) + 4 H(+)(out). In terms of biological role, core subunit of the mitochondrial membrane respiratory chain NADH dehydrogenase (Complex I) that is believed to belong to the minimal assembly required for catalysis. Complex I functions in the transfer of electrons from NADH to the respiratory chain. The immediate electron acceptor for the enzyme is believed to be ubiquinone. The chain is NADH-ubiquinone oxidoreductase chain 4L (ND4L) from Phytophthora infestans (Potato late blight agent).